A 349-amino-acid chain; its full sequence is Guanine nucleotide-binding protein alpha-13 subunit (349 aa).

Glycine 2 carries N-myristoyl glycine lipidation. A lipid anchor (S-palmitoyl cysteine) is attached at cysteine 3. Residues 35-349 (SHIRLLLLGS…VFKDIMKRKR (315 aa)) form the G-alpha domain. Residues 38–51 (RLLLLGSAESGKTT) form a G1 motif region. GTP is bound by residues 43-50 (GSAESGKT), 177-183 (IMAYVPT), 202-206 (DIGGQ), 271-274 (NEID), and alanine 327. The G2 motif stretch occupies residues 175-183 (DLIMAYVPT). Threonine 183 provides a ligand contact to Mg(2+). The segment at 198–207 (FQLFDIGGQK) is G3 motif. Residues 267 to 274 (YLFLNEID) form a G4 motif region. Residues 325–330 (CIAIDT) form a G5 motif region.

The protein belongs to the G-alpha family. G proteins are composed of 3 units; alpha, beta and gamma. The alpha chain contains the guanine nucleotide binding site.

Guanine nucleotide-binding proteins (G proteins) are involved as modulators or transducers in various transmembrane signaling systems. The protein is Guanine nucleotide-binding protein alpha-13 subunit of Caenorhabditis briggsae.